The sequence spans 207 residues: Large ribosomal subunit protein uL4 (207 aa).

Residues 55–76 (ALVSGGGKKPWRQKGTGRARHG) form a disordered region. Basic residues predominate over residues 63 to 76 (KPWRQKGTGRARHG).

The protein belongs to the universal ribosomal protein uL4 family. As to quaternary structure, part of the 50S ribosomal subunit.

One of the primary rRNA binding proteins, this protein initially binds near the 5'-end of the 23S rRNA. It is important during the early stages of 50S assembly. It makes multiple contacts with different domains of the 23S rRNA in the assembled 50S subunit and ribosome. Functionally, forms part of the polypeptide exit tunnel. This Phytoplasma mali (strain AT) protein is Large ribosomal subunit protein uL4.